The sequence spans 1045 residues: MSLPLKTIVHLVKPFACTARFSARYPIHVIVVAVLLSAAAYLSVTQSYLNEWKLDSNQYSTYLSIKPDELFEKCTHYYRSPVSDTWKLLSSKEAADIYTPFHYYLSTISFQSKDNSTTLPSLDDVIYSVDHTRYLLSEEPKIPTELVSENGTKWRLRNNSNFILDLHNIYRNMVKQFSNKTSEFDQFDLFIILAAYLTLFYTLCCLFNDMRKIGSKFWLSFSALSNSACALYLSLYTTHSLLKKPASLLSLVIGLPFIVVIIGFKHKVRLAAFSLQKFHRISIDKKITVSNIIYEAMFQEGAYLIRDYLFYISSFIGCAIYARHLPGLVNFCILSTFMLVFDLLLSATFYSAILSMKLEINIIHRSTVIRQTLEEDGVVPTTADIIYKDETASEPHFLRSNVAIILGKASVIGLLLLINLYVFTDKLNATILNTVYFDSTIYSLPNFINYKDIGNLSNQVIISVLPKQYYTPLKKYHQIEDSVLLIIDSVSNAIRDQFISKLLFFAFAVSISINVYLLNAAKIHTGYMNFQPQSNKIDDLVVQQKSATIEFSETRSMPASSGLETPVTAKDIIISEEIQNNECVYALSSQDEPIRPLSNLVELMEKEQLKNMNNTEVSNLVVNGKLPLYSLEKKLEDTTRAVLVRRKALSTLAESPILVSEKLPFRNYDYDRVFGACCENVIGYMPIPVGVIGPLIIDGTSYHIPMATTEGCLVASAMRGCKAINAGGGATTVLTKDGMTRGPVVRFPTLIRSGACKIWLDSEEGQNSIKKAFNSTSRFARLQHIQTCLAGDLLFMRFRTTTGDAMGMNMISKGVEYSLKQMVEEYGWEDMEVVSVSGNYCTDKKPAAINWIEGRGKSVVAEATIPGDVVKSVLKSDVSALVELNISKNLVGSAMAGSVGGFNAHAANLVTALFLALGQDPAQNVESSNCITLMKEVDGDLRISVSMPSIEVGTIGGGTVLEPQGAMLDLLGVRGPHPTEPGANARQLARIIACAVLAGELSLCSALAAGHLVQSHMTHNRKTNKANELPQPSNKGPPCKTSALL.

The Cytoplasmic portion of the chain corresponds to 1–24; the sequence is MSLPLKTIVHLVKPFACTARFSAR. Residues 25-45 form a helical membrane-spanning segment; it reads YPIHVIVVAVLLSAAAYLSVT. The Lumenal segment spans residues 46 to 186; it reads QSYLNEWKLD…FSNKTSEFDQ (141 aa). N-linked (GlcNAc...) asparagine glycans are attached at residues N115, N150, N158, and N179. Residues 187–207 form a helical membrane-spanning segment; that stretch reads FDLFIILAAYLTLFYTLCCLF. In terms of domain architecture, SSD spans 188-356; it reads DLFIILAAYL…ATFYSAILSM (169 aa). The Cytoplasmic segment spans residues 208–216; the sequence is NDMRKIGSK. The chain crosses the membrane as a helical span at residues 217–237; that stretch reads FWLSFSALSNSACALYLSLYT. Over 238 to 243 the chain is Lumenal; the sequence is THSLLK. The helical transmembrane segment at 244–264 threads the bilayer; sequence KPASLLSLVIGLPFIVVIIGF. Residues 265–301 are Cytoplasmic-facing; the sequence is KHKVRLAAFSLQKFHRISIDKKITVSNIIYEAMFQEG. Residues 302–322 form a helical membrane-spanning segment; it reads AYLIRDYLFYISSFIGCAIYA. Residues 323–324 lie on the Lumenal side of the membrane; sequence RH. Residues 325 to 345 traverse the membrane as a helical segment; sequence LPGLVNFCILSTFMLVFDLLL. Over 346–402 the chain is Cytoplasmic; sequence SATFYSAILSMKLEINIIHRSTVIRQTLEEDGVVPTTADIIYKDETASEPHFLRSNV. Residues 403–423 form a helical membrane-spanning segment; that stretch reads AIILGKASVIGLLLLINLYVF. Over 424-497 the chain is Lumenal; sequence TDKLNATILN…DSVSNAIRDQ (74 aa). N428 and N455 each carry an N-linked (GlcNAc...) asparagine glycan. The chain crosses the membrane as a helical span at residues 498–518; it reads FISKLLFFAFAVSISINVYLL. Residues 519-1045 lie on the Cytoplasmic side of the membrane; that stretch reads NAAKIHTGYM…GPPCKTSALL (527 aa). Residue T565 is modified to Phosphothreonine. The Charge relay system role is filled by E710. Residue 716–722 coordinates CoA; it reads SAMRGCK. NADP(+)-binding positions include 777-779 and 804-812; these read SRF and DAMGMNMIS. K844 functions as the Charge relay system in the catalytic mechanism. Residue 873–875 participates in CoA binding; it reads VLK. D920 serves as the catalytic Charge relay system. 1015–1016 lines the CoA pocket; the sequence is SH. H1016 acts as the Proton donor in catalysis. The segment at 1018–1045 is disordered; that stretch reads THNRKTNKANELPQPSNKGPPCKTSALL. 1020-1021 lines the NADP(+) pocket; it reads NR.

This sequence belongs to the HMG-CoA reductase family.

The protein localises to the endoplasmic reticulum membrane. The protein resides in the nucleus envelope. The enzyme catalyses (R)-mevalonate + 2 NADP(+) + CoA = (3S)-3-hydroxy-3-methylglutaryl-CoA + 2 NADPH + 2 H(+). It participates in metabolic intermediate biosynthesis; (R)-mevalonate biosynthesis; (R)-mevalonate from acetyl-CoA: step 3/3. Functionally, HMG-CoA reductase; part of the first module of ergosterol biosynthesis pathway constitutes by the early steps of the pathway, conserved across all eukaryotes, and which results in the formation of mevalonate from acetyl-coenzyme A (acetyl-CoA). HMG1 and HMG2 catalyze the reduction of hydroxymethylglutaryl-CoA (HMG-CoA) to mevalonate that is the rate-limiting step within the first mosule. The first module starts with the action of the cytosolic acetyl-CoA acetyltransferase ERG10 that catalyzes the formation of acetoacetyl-CoA. The hydroxymethylglutaryl-CoA synthase ERG13 then condenses acetyl-CoA with acetoacetyl-CoA to form HMG-CoA. The rate-limiting step of the early module is the reduction to mevalonate by the 3-hydroxy-3-methylglutaryl-coenzyme A (HMG-CoA) reductases HMG1 and HMG2 which are derived from a single ancestral HMGR gene by gene duplication. The chain is 3-hydroxy-3-methylglutaryl-coenzyme A reductase 2 from Saccharomyces cerevisiae (strain ATCC 204508 / S288c) (Baker's yeast).